The following is a 284-amino-acid chain: Bifunctional protein FolD (284 aa).

NADP(+) contacts are provided by residues 165-167, S190, and I231; that span reads GAS.

The protein belongs to the tetrahydrofolate dehydrogenase/cyclohydrolase family. Homodimer.

The enzyme catalyses (6R)-5,10-methylene-5,6,7,8-tetrahydrofolate + NADP(+) = (6R)-5,10-methenyltetrahydrofolate + NADPH. It carries out the reaction (6R)-5,10-methenyltetrahydrofolate + H2O = (6R)-10-formyltetrahydrofolate + H(+). It functions in the pathway one-carbon metabolism; tetrahydrofolate interconversion. Its function is as follows. Catalyzes the oxidation of 5,10-methylenetetrahydrofolate to 5,10-methenyltetrahydrofolate and then the hydrolysis of 5,10-methenyltetrahydrofolate to 10-formyltetrahydrofolate. This chain is Bifunctional protein FolD, found in Polynucleobacter asymbioticus (strain DSM 18221 / CIP 109841 / QLW-P1DMWA-1) (Polynucleobacter necessarius subsp. asymbioticus).